The sequence spans 224 residues: Charged multivesicular body protein 4b (224 aa).

Positions 1 to 23 (MSVFGKLFGAGGGKAGKGGPTPQ) are disordered. Ser2 is subject to N-acetylserine. Lys6 is subject to N6-acetyllysine. Gly residues predominate over residues 8–19 (FGAGGGKAGKGG). Positions 23–183 (QEAIQRLRDT…EELDKNLLEI (161 aa)) form a coiled coil. N6-acetyllysine is present on Lys114. Ser184 and Ser223 each carry phosphoserine. A disordered region spans residues 185 to 224 (GPETVPLPNVPSIALPSKPAKKKEEEDDDMKELENWAGSM).

Belongs to the SNF7 family. As to quaternary structure, probable core component of the endosomal sorting required for transport complex III (ESCRT-III). ESCRT-III components are thought to multimerize to form a flat lattice on the perimeter membrane of the endosome. Several assembly forms of ESCRT-III may exist that interact and act sequentially. Interacts with CHMP6 and CHMP4C. Interacts with PDCD6IP; the interaction is direct. Interacts with VPS4A; the interaction is direct. Interacts with VPS4B; the interaction is direct. Interacts with CHMP7. Interacts with CFTR; the interaction requires misfolded CFTR. Interacts with PTPN23. Interacts with CC2D1B. Post-translationally, ISGylated. Isgylation weakens its interaction with VPS4A. As to expression, widely expressed. Expressed at higher level in heart and skeletal muscle. Also expressed in brain, colon, thymus, spleen, kidney, liver, small intestine, placenta, lung and peripheral blood lymphocytes.

The protein localises to the cytoplasm. It is found in the cytosol. Its subcellular location is the late endosome membrane. The protein resides in the midbody. It localises to the nucleus envelope. Probable core component of the endosomal sorting required for transport complex III (ESCRT-III) which is involved in multivesicular bodies (MVBs) formation and sorting of endosomal cargo proteins into MVBs. MVBs contain intraluminal vesicles (ILVs) that are generated by invagination and scission from the limiting membrane of the endosome and mostly are delivered to lysosomes enabling degradation of membrane proteins, such as stimulated growth factor receptors, lysosomal enzymes and lipids. The MVB pathway appears to require the sequential function of ESCRT-O, -I,-II and -III complexes. ESCRT-III proteins mostly dissociate from the invaginating membrane before the ILV is released. The ESCRT machinery also functions in topologically equivalent membrane fission events, such as the terminal stages of cytokinesis. Together with SPAST, the ESCRT-III complex promotes nuclear envelope sealing and mitotic spindle disassembly during late anaphase. Plays a role in the endosomal sorting pathway. ESCRT-III proteins are believed to mediate the necessary vesicle extrusion and/or membrane fission activities, possibly in conjunction with the AAA ATPase VPS4. When overexpressed, membrane-assembled circular arrays of CHMP4B filaments can promote or stabilize negative curvature and outward budding. CHMP4A/B/C are required for the exosomal release of SDCBP, CD63 and syndecan. Majority of the protein exists in a folded closed conformation. In terms of biological role, (Microbial infection) The ESCRT machinery also functions in topologically equivalent membrane fission events, such as the budding of enveloped viruses (HIV-1 and other lentiviruses). Via its interaction with PDCD6IP involved in HIV-1 p6- and p9-dependent virus release. The sequence is that of Charged multivesicular body protein 4b (CHMP4B) from Homo sapiens (Human).